The following is an 83-amino-acid chain: Protein L83L (83 aa).

The interval 1–26 (MDTSLKKNNGALEADNKNYQNYKDEP) is disordered.

It belongs to the asfivirus L83L family. As to quaternary structure, interacts with host IL1B.

It localises to the host cytoplasm. In terms of biological role, may subvert the host innate immune response by interacting with host IL1B and interfering with its function. This chain is Protein L83L, found in Ornithodoros (relapsing fever ticks).